The chain runs to 258 residues: UPF0246 protein Asuc_0575 (258 aa).

The protein belongs to the UPF0246 family.

This is UPF0246 protein Asuc_0575 from Actinobacillus succinogenes (strain ATCC 55618 / DSM 22257 / CCUG 43843 / 130Z).